A 542-amino-acid polypeptide reads, in one-letter code: 4-coumarate--CoA ligase 2 (542 aa).

ATP contacts are provided by Ser-189, Ser-190, Gly-191, Thr-192, Thr-193, and Lys-197. Residues Tyr-239 and Ser-243 each coordinate (E)-4-coumaroyl-AMP. Residues Tyr-239 and Ser-243 each coordinate (E)-caffeoyl-AMP. Positions 239 and 243 each coordinate (E)-feruloyl-AMP. Lys-260 lines the CoA pocket. The SBD1 stretch occupies residues 262 to 331; it reads DIVSFLELIQ…AKFPNAKLGQ (70 aa). Ala-309 is a (E)-4-coumaroyl-AMP binding site. (E)-caffeoyl-AMP is bound at residue Ala-309. Ala-309 contacts (E)-feruloyl-AMP. ATP is bound by residues Gln-331, Gly-332, and Thr-336. Residues Gly-332, Thr-336, Met-344, Asp-420, Arg-435, Lys-437, and Lys-441 each coordinate (E)-4-coumaroyl-AMP. (E)-caffeoyl-AMP contacts are provided by Gly-332, Thr-336, Met-344, Asp-420, Arg-435, Lys-437, and Lys-441. Positions 332, 336, 344, 420, 435, 437, and 441 each coordinate (E)-feruloyl-AMP. AMP is bound by residues Gly-332 and Thr-336. The segment at 332–399 is SBD2; that stretch reads GYGMTEAGPV…IRGDQIMKGY (68 aa). The ATP site is built by Asp-420 and Arg-435. Position 420 (Asp-420) interacts with AMP. Lys-437 and Lys-441 together coordinate AMP. CoA-binding residues include Lys-443 and Gly-444. Residue Gln-446 participates in AMP binding. Residue Lys-526 participates in ATP binding.

The protein belongs to the ATP-dependent AMP-binding enzyme family. The cofactor is Mg(2+). In terms of tissue distribution, mainly expressed in old stems and, to a lower extent, in flowers (e.g. in ovary), leaves, young stems, shoot tips and patel limbs.

The catalysed reaction is (E)-4-coumarate + ATP + CoA = (E)-4-coumaroyl-CoA + AMP + diphosphate. The enzyme catalyses (E)-caffeate + ATP + CoA = (E)-caffeoyl-CoA + AMP + diphosphate. It carries out the reaction (E)-ferulate + ATP + CoA = (E)-feruloyl-CoA + AMP + diphosphate. It catalyses the reaction (E)-cinnamate + ATP + CoA = (E)-cinnamoyl-CoA + AMP + diphosphate. The catalysed reaction is (E)-4-coumarate + ATP + H(+) = (E)-4-coumaroyl-AMP + diphosphate. The enzyme catalyses (E)-4-coumaroyl-AMP + CoA = (E)-4-coumaroyl-CoA + AMP + H(+). It carries out the reaction (E)-caffeate + ATP + H(+) = (E)-caffeoyl-AMP + diphosphate. It catalyses the reaction (E)-caffeoyl-AMP + CoA = (E)-caffeoyl-CoA + AMP + H(+). The catalysed reaction is (E)-ferulate + ATP + H(+) = (E)-feruloyl-AMP + diphosphate. The enzyme catalyses (E)-feruloyl-AMP + CoA = (E)-feruloyl-CoA + AMP + H(+). Its pathway is phytoalexin biosynthesis; 3,4',5-trihydroxystilbene biosynthesis; 3,4',5-trihydroxystilbene from trans-4-coumarate: step 1/2. Functionally, major enzyme of the phenylpropanoid pathway that mediates the production of several precursors for numerous metabolites and regulates carbon flow. Catalyzes the formation of CoA thioesters using 4-coumarate, ferulate, caffeate, and cinnamate as substrates. Follows a two-step reaction mechanism, wherein a (hydroxy)cinnamate substrate first undergoes adenylation by ATP leading to an acyl-AMP, followed by a thioesterification in the presence of CoA to yield the final (hydroxy)cinnamoyl-CoA product. Almost inactive toward sinapate. The polypeptide is 4-coumarate--CoA ligase 2 (Nicotiana tabacum (Common tobacco)).